Consider the following 207-residue polypeptide: Ribosomal RNA large subunit methyltransferase E (207 aa).

The S-adenosyl-L-methionine site is built by Gly-60, Trp-62, Asp-80, Asp-96, and Asp-121. Lys-161 functions as the Proton acceptor in the catalytic mechanism.

This sequence belongs to the class I-like SAM-binding methyltransferase superfamily. RNA methyltransferase RlmE family.

It localises to the cytoplasm. It carries out the reaction uridine(2552) in 23S rRNA + S-adenosyl-L-methionine = 2'-O-methyluridine(2552) in 23S rRNA + S-adenosyl-L-homocysteine + H(+). In terms of biological role, specifically methylates the uridine in position 2552 of 23S rRNA at the 2'-O position of the ribose in the fully assembled 50S ribosomal subunit. The polypeptide is Ribosomal RNA large subunit methyltransferase E (Azotobacter vinelandii (strain DJ / ATCC BAA-1303)).